The following is a 221-amino-acid chain: Triosephosphate isomerase (221 aa).

8-10 (NLK) is a binding site for substrate. The active-site Electrophile is histidine 92. Glutamate 140 serves as the catalytic Proton acceptor. Residues isoleucine 145, glycine 180, and 201–202 (AS) each bind substrate.

Belongs to the triosephosphate isomerase family. As to quaternary structure, homotetramer; dimer of dimers.

Its subcellular location is the cytoplasm. It catalyses the reaction D-glyceraldehyde 3-phosphate = dihydroxyacetone phosphate. It functions in the pathway carbohydrate biosynthesis; gluconeogenesis. The protein operates within carbohydrate degradation; glycolysis; D-glyceraldehyde 3-phosphate from glycerone phosphate: step 1/1. In terms of biological role, involved in the gluconeogenesis. Catalyzes stereospecifically the conversion of dihydroxyacetone phosphate (DHAP) to D-glyceraldehyde-3-phosphate (G3P). In Methanococcoides burtonii (strain DSM 6242 / NBRC 107633 / OCM 468 / ACE-M), this protein is Triosephosphate isomerase.